The following is a 316-amino-acid chain: Transaldolase (316 aa).

K132 acts as the Schiff-base intermediate with substrate in catalysis.

This sequence belongs to the transaldolase family. Type 1 subfamily. As to quaternary structure, homodimer.

Its subcellular location is the cytoplasm. It catalyses the reaction D-sedoheptulose 7-phosphate + D-glyceraldehyde 3-phosphate = D-erythrose 4-phosphate + beta-D-fructose 6-phosphate. Its pathway is carbohydrate degradation; pentose phosphate pathway; D-glyceraldehyde 3-phosphate and beta-D-fructose 6-phosphate from D-ribose 5-phosphate and D-xylulose 5-phosphate (non-oxidative stage): step 2/3. Functionally, transaldolase is important for the balance of metabolites in the pentose-phosphate pathway. In Aliivibrio fischeri (strain ATCC 700601 / ES114) (Vibrio fischeri), this protein is Transaldolase.